We begin with the raw amino-acid sequence, 467 residues long: 2-succinylbenzoate--CoA ligase (467 aa).

It belongs to the ATP-dependent AMP-binding enzyme family. MenE subfamily.

The catalysed reaction is 2-succinylbenzoate + ATP + CoA = 2-succinylbenzoyl-CoA + AMP + diphosphate. It functions in the pathway quinol/quinone metabolism; 1,4-dihydroxy-2-naphthoate biosynthesis; 1,4-dihydroxy-2-naphthoate from chorismate: step 5/7. It participates in quinol/quinone metabolism; menaquinone biosynthesis. Its function is as follows. Converts 2-succinylbenzoate (OSB) to 2-succinylbenzoyl-CoA (OSB-CoA). This Listeria monocytogenes serovar 1/2a (strain ATCC BAA-679 / EGD-e) protein is 2-succinylbenzoate--CoA ligase.